A 425-amino-acid polypeptide reads, in one-letter code: Na(+)/H(+) antiporter NhaA 1 (425 aa).

Helical transmembrane passes span 20-40 (AGGV…NSPL), 65-85 (PHLW…GLEI), 102-122 (LPFI…LAVT), 131-151 (GWAI…ALLG), 160-180 (LFLT…IALA), 183-203 (ASIK…MMAM), 218-238 (FVLL…AGVL), 272-292 (FLIV…GFSL), 303-323 (IAAG…WAAV), 342-362 (LSVL…LAFA), and 373-393 (LGVI…LRFA).

It belongs to the NhaA Na(+)/H(+) (TC 2.A.33) antiporter family.

It is found in the cell inner membrane. It catalyses the reaction Na(+)(in) + 2 H(+)(out) = Na(+)(out) + 2 H(+)(in). In terms of biological role, na(+)/H(+) antiporter that extrudes sodium in exchange for external protons. The sequence is that of Na(+)/H(+) antiporter NhaA 1 from Novosphingobium aromaticivorans (strain ATCC 700278 / DSM 12444 / CCUG 56034 / CIP 105152 / NBRC 16084 / F199).